Consider the following 179-residue polypeptide: Large ribosomal subunit protein uL5 (179 aa).

It belongs to the universal ribosomal protein uL5 family. In terms of assembly, part of the 50S ribosomal subunit; part of the 5S rRNA/L5/L18/L25 subcomplex. Contacts the 5S rRNA and the P site tRNA. Forms a bridge to the 30S subunit in the 70S ribosome.

This is one of the proteins that bind and probably mediate the attachment of the 5S RNA into the large ribosomal subunit, where it forms part of the central protuberance. In the 70S ribosome it contacts protein S13 of the 30S subunit (bridge B1b), connecting the 2 subunits; this bridge is implicated in subunit movement. Contacts the P site tRNA; the 5S rRNA and some of its associated proteins might help stabilize positioning of ribosome-bound tRNAs. The chain is Large ribosomal subunit protein uL5 from Dehalococcoides mccartyi (strain ATCC BAA-2266 / KCTC 15142 / 195) (Dehalococcoides ethenogenes (strain 195)).